The following is a 148-amino-acid chain: uncharacterized protein (148 aa).

The first 16 residues, 1–16 (MDVLFIALLVAPLILG), serve as a signal peptide directing secretion. Asparagine 50 is a glycosylation site (N-linked (GlcNAc...) asparagine). Positions 91 to 125 (MDPQNPVTTKPVTTEPVTTEPVTTEPQSPNQNDAM) are disordered. Positions 96–116 (PVTTKPVTTEPVTTEPVTTEP) are enriched in low complexity.

It is found in the secreted. This is an uncharacterized protein from Mus musculus (Mouse).